The following is a 392-amino-acid chain: L-rhamnonate dehydratase (392 aa).

Residues His-22 and Arg-48 each contribute to the substrate site. Mg(2+)-binding residues include Asp-214, Glu-240, and Glu-268. The Proton acceptor role is filled by His-318. A substrate-binding site is contributed by Glu-338.

Belongs to the mandelate racemase/muconate lactonizing enzyme family. RhamD subfamily. As to quaternary structure, homooctamer; tetramer of dimers. Requires Mg(2+) as cofactor.

It catalyses the reaction L-rhamnonate = 2-dehydro-3-deoxy-L-rhamnonate + H2O. Catalyzes the dehydration of L-rhamnonate to 2-keto-3-deoxy-L-rhamnonate (KDR). The sequence is that of L-rhamnonate dehydratase from Burkholderia cenocepacia (strain HI2424).